The sequence spans 750 residues: EF-hand domain-containing family member C2 (750 aa).

3 DM10 domains span residues aspartate 75 to glycine 182, aspartate 226 to tyrosine 368, and isoleucine 430 to threonine 537. In terms of domain architecture, EF-hand spans serine 557–glycine 592.

Microtubule inner protein component of sperm flagellar doublet microtubules.

It is found in the cytoplasm. The protein localises to the cytoskeleton. The protein resides in the cilium axoneme. Its subcellular location is the flagellum axoneme. In terms of biological role, microtubule inner protein (MIP) part of the dynein-decorated doublet microtubules (DMTs) in cilia axoneme, which is required for motile cilia beating. This chain is EF-hand domain-containing family member C2 (Efhc2), found in Mus musculus (Mouse).